The sequence spans 396 residues: Activity-regulated cytoskeleton-associated protein (396 aa).

The stretch at 54–78 (SKQVERELKGLHRSVGKLENNLDGY) forms a coiled coil. The interval 89–100 (KSIKACLCRCQE) is interaction with SH3GL1 or SH3GL3. The disordered stretch occupies residues 177-207 (PPAAGELPEQESVEAQQYQSWGPGEDGQPSP). Residues 195 to 214 (QSWGPGEDGQPSPGVDTQIF) are interaction with DNM2. Position 260 is a phosphoserine; by CaMK2 (Ser260). Glycyl lysine isopeptide (Lys-Gly) (interchain with G-Cter in ubiquitin) cross-links involve residues Lys268 and Lys269. Thr278 carries the post-translational modification Phosphothreonine. Residues 356 to 396 (QDGLEQAAEPSGTPLPTEDETEALTPALTSESVASDRTQPE) are disordered. Residues 382-396 (ALTSESVASDRTQPE) show a composition bias toward polar residues.

It belongs to the ARC/ARG3.1 family. As to quaternary structure, homooligomer; homooligomerizes into virion-like capsids. Interacts with SH3GL1/endophilin-2, SH3GL3/endophilin-3 and DNM2/DYN2. Interacts with CAMK2B (in the kinase inactive state); leading to target ARC to inactive synapses. Interacts with PSEN1. Interacts with GRIN2A and GRIN2B; inhibiting homooligomerization. Post-translationally, ubiquitinated by UBE3A, leading to its degradation by the proteasome, thereby promoting AMPA receptors (AMPARs) expression at synapses. Ubiquitinated by RNF216 at Lys-268 and Lys-269 limiting ARC protein levels induced by synaptic activity and thus regulating ARC-dependent forms of synaptic plasticity. Palmitoylation anchors the protein into the membrane by allowing direct insertion into the hydrophobic core of the lipid bilayer. In terms of processing, phosphorylation at Ser-260 by CaMK2 prevents homooligomerization into virion-like capsids by disrupting an interaction surface essential for high-order oligomerization. Phosphorylation by CaMK2 inhibits synaptic activity. In terms of tissue distribution, expressed in brain and testis. In primary visual cortex, detected in all cortical layers with the exception of layer 5: present at highest level in layers 2/3 and 4, the predominant sites of ocular dominance plasticity (at protein level). Also expressed in skin-migratory dendritic cells.

It is found in the extracellular vesicle membrane. Its subcellular location is the postsynaptic cell membrane. The protein localises to the synapse. It localises to the postsynaptic density. The protein resides in the early endosome membrane. It is found in the cell projection. Its subcellular location is the dendrite. The protein localises to the cytoplasm. It localises to the cytoskeleton. The protein resides in the cell cortex. It is found in the dendritic spine. Its subcellular location is the cytoplasmic vesicle. The protein localises to the secretory vesicle. It localises to the acrosome. The protein resides in the clathrin-coated vesicle membrane. Master regulator of synaptic plasticity that self-assembles into virion-like capsids that encapsulate RNAs and mediate intercellular RNA transfer in the nervous system. ARC protein is released from neurons in extracellular vesicles that mediate the transfer of ARC mRNA into new target cells, where ARC mRNA can undergo activity-dependent translation. ARC capsids are endocytosed and are able to transfer ARC mRNA into the cytoplasm of neurons. Acts as a key regulator of synaptic plasticity: required for protein synthesis-dependent forms of long-term potentiation (LTP) and depression (LTD) and for the formation of long-term memory. Regulates synaptic plasticity by promoting endocytosis of AMPA receptors (AMPARs) in response to synaptic activity: this endocytic pathway maintains levels of surface AMPARs in response to chronic changes in neuronal activity through synaptic scaling, thereby contributing to neuronal homeostasis. Acts as a postsynaptic mediator of activity-dependent synapse elimination in the developing cerebellum by mediating elimination of surplus climbing fiber synapses. Accumulates at weaker synapses, probably to prevent their undesired enhancement. This suggests that ARC-containing virion-like capsids may be required to eliminate synaptic material. Required to transduce experience into long-lasting changes in visual cortex plasticity and for long-term memory. Involved in postsynaptic trafficking and processing of amyloid-beta A4 (APP) via interaction with PSEN1. In addition to its role in synapses, also involved in the regulation of the immune system: specifically expressed in skin-migratory dendritic cells and regulates fast dendritic cell migration, thereby regulating T-cell activation. The sequence is that of Activity-regulated cytoskeleton-associated protein from Mus musculus (Mouse).